Here is a 602-residue protein sequence, read N- to C-terminus: Elongation factor 4 (602 aa).

The region spanning 7–188 (ENIRNFSIIA…SIIRLVPPPK (182 aa)) is the tr-type G domain. GTP-binding positions include 19 to 24 (DHGKST) and 135 to 138 (NKID).

This sequence belongs to the TRAFAC class translation factor GTPase superfamily. Classic translation factor GTPase family. LepA subfamily.

Its subcellular location is the cell inner membrane. The catalysed reaction is GTP + H2O = GDP + phosphate + H(+). In terms of biological role, required for accurate and efficient protein synthesis under certain stress conditions. May act as a fidelity factor of the translation reaction, by catalyzing a one-codon backward translocation of tRNAs on improperly translocated ribosomes. Back-translocation proceeds from a post-translocation (POST) complex to a pre-translocation (PRE) complex, thus giving elongation factor G a second chance to translocate the tRNAs correctly. Binds to ribosomes in a GTP-dependent manner. The chain is Elongation factor 4 from Chlamydia trachomatis serovar D (strain ATCC VR-885 / DSM 19411 / UW-3/Cx).